A 98-amino-acid chain; its full sequence is Large ribosomal subunit protein bL27 (98 aa).

A propeptide spanning residues 1–13 (MKKIWFHLDLQFF) is cleaved from the precursor.

This sequence belongs to the bacterial ribosomal protein bL27 family. In terms of processing, the N-terminus is cleaved by ribosomal processing cysteine protease Prp.

This is Large ribosomal subunit protein bL27 from Mycoplasmoides gallisepticum (strain R(low / passage 15 / clone 2)) (Mycoplasma gallisepticum).